The chain runs to 364 residues: Uroporphyrinogen decarboxylase (364 aa).

Substrate is bound by residues 28-32 (RQAGR), D78, Y160, T215, and H333.

Belongs to the uroporphyrinogen decarboxylase family. Homodimer.

It localises to the cytoplasm. The catalysed reaction is uroporphyrinogen III + 4 H(+) = coproporphyrinogen III + 4 CO2. It functions in the pathway porphyrin-containing compound metabolism; protoporphyrin-IX biosynthesis; coproporphyrinogen-III from 5-aminolevulinate: step 4/4. Its function is as follows. Catalyzes the decarboxylation of four acetate groups of uroporphyrinogen-III to yield coproporphyrinogen-III. This is Uroporphyrinogen decarboxylase from Burkholderia cenocepacia (strain ATCC BAA-245 / DSM 16553 / LMG 16656 / NCTC 13227 / J2315 / CF5610) (Burkholderia cepacia (strain J2315)).